We begin with the raw amino-acid sequence, 107 residues long: Transmembrane protein 213 (107 aa).

The N-terminal stretch at 1–27 is a signal peptide; it reads MQRLPAATRATLILSLAFASLHSACSA. The Extracellular portion of the chain corresponds to 28–70; that stretch reads EASSSNSSSLTAHHPDPGTLEQCLNVDFCPQAARCCRTGVDEY. A helical transmembrane segment spans residues 71-91; the sequence is GWIAAAVGWSLWFLTLILLCV. The Cytoplasmic segment spans residues 92–107; the sequence is DKLMKLTPDEPKDLQA.

Its subcellular location is the membrane. This is Transmembrane protein 213 (TMEM213) from Homo sapiens (Human).